Reading from the N-terminus, the 416-residue chain is cAMP-dependent protein kinase type II-beta regulatory subunit (416 aa).

A dimerization and phosphorylation region spans residues 2–151 (SIEIPAGLTE…RLQEACKDIL (150 aa)). Positions 53 to 97 (HEGRTWGDAGAAAGGGTPSKGVNFAEEPMRSDSENGEEEEAAEAG) are disordered. Residue threonine 69 is modified to Phosphothreonine. Serine 83, serine 85, and serine 112 each carry phosphoserine. Residues 152–273 (LFKN…ESLP), glutamate 221, arginine 230, 274–416 (FLKS…EPTA), glutamate 350, and arginine 359 contribute to the 3',5'-cyclic AMP site.

This sequence belongs to the cAMP-dependent kinase regulatory chain family. As to quaternary structure, the inactive form of the enzyme is composed of two regulatory chains and two catalytic chains. Activation by cAMP produces two active catalytic monomers and a regulatory dimer that binds four cAMP molecules. Interacts with PRKACA and PRKACB. Interacts with the phosphorylated form of PJA2. Forms a complex composed of PRKAR2B, GSK3B and GSKIP through GSKIP interaction; facilitates PKA-induced phosphorylation and regulates GSK3B activity. Phosphorylated by the activated catalytic chain. In terms of tissue distribution, four types of regulatory chains are found: I-alpha, I-beta, II-alpha, and II-beta. Their expression varies among tissues and is in some cases constitutive and in others inducible. Brain. Present in a few pyramidal neurons and mostly in mossy fibers. Colocalizes with PJA2 in dentate granule cells and at postsynaptic sites of primary hippocampal neurons.

Its subcellular location is the cytoplasm. The protein resides in the cell membrane. Its function is as follows. Regulatory subunit of the cAMP-dependent protein kinases involved in cAMP signaling in cells. Type II regulatory chains mediate membrane association by binding to anchoring proteins, including the MAP2 kinase. The polypeptide is cAMP-dependent protein kinase type II-beta regulatory subunit (Prkar2b) (Rattus norvegicus (Rat)).